The primary structure comprises 129 residues: Thyroid hormone receptor alpha (129 aa).

One can recognise an NR LBD domain in the interval Ala26–Arg129. 3,3',5-triiodo-L-thyronine is bound at residue Arg91.

Belongs to the nuclear hormone receptor family. NR1 subfamily.

It is found in the nucleus. In terms of biological role, nuclear hormone receptor that can act as a repressor or activator of transcription. High affinity receptor for thyroid hormones, including triiodothyronine and thyroxine. This Sparus aurata (Gilthead sea bream) protein is Thyroid hormone receptor alpha (thra1).